A 257-amino-acid chain; its full sequence is Transcription factor MYB4 (257 aa).

2 consecutive HTH myb-type domains span residues K9–L61 and R62–L116. 2 DNA-binding regions (H-T-H motif) span residues W37–L61 and W89–L112. Residues R115–I179 are disordered. The segment covering G130–K140 has biased composition (basic residues). The segment covering K141–V170 has biased composition (low complexity).

Its subcellular location is the nucleus. In terms of biological role, transcriptional activator involved in cold stress response. Regulates positively the expression of genes involved in reactive oxygen species (ROS) scavenging such as peroxidase and superoxide dismutase during cold stress. Transactivates a complex gene network that have major effects on stress tolerance and panicle development. This chain is Transcription factor MYB4, found in Oryza sativa subsp. japonica (Rice).